The sequence spans 153 residues: UPF0756 membrane protein LCA_1031 (153 aa).

Helical transmembrane passes span 4–24 (WLFL…SLII), 52–72 (WGVT…QIGF), 85–105 (FIAV…VGLL), and 115–135 (LVFG…GPVI).

Belongs to the UPF0756 family.

It is found in the cell membrane. This Latilactobacillus sakei subsp. sakei (strain 23K) (Lactobacillus sakei subsp. sakei) protein is UPF0756 membrane protein LCA_1031.